We begin with the raw amino-acid sequence, 197 residues long: Probable GTP-binding protein EngB (197 aa).

The region spanning 22–194 (DLPEIAFAGR…LETIARMTGI (173 aa)) is the EngB-type G domain. GTP-binding positions include 30-37 (GRSNVGKS), 57-61 (GKTRL), 75-78 (DLPG), 142-145 (TKAD), and 173-175 (FST). S37 and T59 together coordinate Mg(2+).

The protein belongs to the TRAFAC class TrmE-Era-EngA-EngB-Septin-like GTPase superfamily. EngB GTPase family. Mg(2+) serves as cofactor.

Necessary for normal cell division and for the maintenance of normal septation. The polypeptide is Probable GTP-binding protein EngB (Desulfosudis oleivorans (strain DSM 6200 / JCM 39069 / Hxd3) (Desulfococcus oleovorans)).